Reading from the N-terminus, the 187-residue chain is GTP cyclohydrolase 1 (187 aa).

Zn(2+)-binding residues include C79, H82, and C150.

This sequence belongs to the GTP cyclohydrolase I family. As to quaternary structure, toroid-shaped homodecamer, composed of two pentamers of five dimers.

It catalyses the reaction GTP + H2O = 7,8-dihydroneopterin 3'-triphosphate + formate + H(+). It participates in cofactor biosynthesis; 7,8-dihydroneopterin triphosphate biosynthesis; 7,8-dihydroneopterin triphosphate from GTP: step 1/1. This is GTP cyclohydrolase 1 from Fusobacterium nucleatum subsp. nucleatum (strain ATCC 25586 / DSM 15643 / BCRC 10681 / CIP 101130 / JCM 8532 / KCTC 2640 / LMG 13131 / VPI 4355).